Here is a 317-residue protein sequence, read N- to C-terminus: Toluene-4-sulfonate monooxygenase system reductase subunit TsaB1 (317 aa).

The FAD-binding FR-type domain maps to 2–108 (SADVPVTVAA…RATCSEMAPE (107 aa)). NAD(+) is bound at residue 110 to 220 (RRVLLLAGGI…PGSVRMERFK (111 aa)). In terms of domain architecture, 2Fe-2S ferredoxin-type spans 230–317 (QPFELVLQRA…CGGGRLVLDI (88 aa)). [2Fe-2S] cluster contacts are provided by Cys-266, Cys-271, Cys-274, and Cys-304.

Monomer. Part of the p-toluenesulfonate methyl-monooxygenase complex TsaBM, comprising the reductase TsaB and the oxygenase TsaM. The cofactor is FMN.

Its function is as follows. Iron-sulfur flavoprotein carrying electrons from NADH to the oxygenase TsaM. Involved in the toluene-4-sulfonate degradation pathway. This is Toluene-4-sulfonate monooxygenase system reductase subunit TsaB1 (tsaB1) from Comamonas testosteroni (Pseudomonas testosteroni).